The primary structure comprises 139 residues: MAGLGQIAFGCEGGIDTCTAAQNTLAVFFDLGPKVGSVGRNLKSNSGRFILEPMPRDSAPAWYAIIRDFDADVPWRLKAFHTAAGLAIEPSVRSVYEGFAVLLTTGQSRIDRTPSVSLPIGSSLETEAITAIHAPKWRG.

This is an uncharacterized protein from Sinorhizobium fredii (strain NBRC 101917 / NGR234).